Consider the following 378-residue polypeptide: Manganese peroxidase 1 (378 aa).

A signal peptide spans 1 to 21 (MAFKSLIAFVALAAAVRAAPT). 5 cysteine pairs are disulfide-bonded: Cys24–Cys36, Cys35–Cys310, Cys54–Cys138, Cys274–Cys340, and Cys362–Cys369. Mn(2+) is bound by residues Glu56 and Glu60. His67 serves as the catalytic Proton acceptor. 4 residues coordinate Ca(2+): Asp68, Gly83, Asp85, and Ser87. 2 N-linked (GlcNAc...) asparagine glycosylation sites follow: Asn97 and Asn152. Heme b is bound at residue His194. A Ca(2+)-binding site is contributed by Ser195. Asp200 is a binding site for Mn(2+). Residues Asp212, Thr214, Thr217, and Asp219 each coordinate Ca(2+). Asn238 is a glycosylation site (N-linked (GlcNAc...) asparagine).

This sequence belongs to the peroxidase family. Ligninase subfamily. Requires Ca(2+) as cofactor. The cofactor is heme b.

The protein resides in the secreted. It carries out the reaction 2 Mn(2+) + H2O2 + 2 H(+) = 2 Mn(3+) + 2 H2O. Functionally, catalyzes the oxidation of Mn(2+) to Mn(3+). The latter, acting as a diffusible redox mediator, is capable of oxidizing a variety of lignin compounds. The polypeptide is Manganese peroxidase 1 (MNP1) (Phanerodontia chrysosporium (White-rot fungus)).